A 227-amino-acid polypeptide reads, in one-letter code: Large ribosomal subunit protein uL1 (227 aa).

This sequence belongs to the universal ribosomal protein uL1 family. Part of the 50S ribosomal subunit.

Functionally, binds directly to 23S rRNA. The L1 stalk is quite mobile in the ribosome, and is involved in E site tRNA release. Its function is as follows. Protein L1 is also a translational repressor protein, it controls the translation of the L11 operon by binding to its mRNA. This Mesoplasma florum (strain ATCC 33453 / NBRC 100688 / NCTC 11704 / L1) (Acholeplasma florum) protein is Large ribosomal subunit protein uL1.